The sequence spans 422 residues: Mannosylglycerate synthase (422 aa).

GDP-alpha-D-mannose is bound by residues 7 to 11, Q66, K77, D101, and 101 to 102; these read PFKEE and DS. (R)-glycerate is bound by residues R132 and 137-140; that span reads AMIT. GDP-alpha-D-mannose-binding residues include L164, D193, and Y221.

The protein belongs to the glycosyltransferase 78 family.

The catalysed reaction is (R)-glycerate + GDP-alpha-D-mannose = (2R)-2-O-(alpha-D-mannosyl)-glycerate + GDP + H(+). The enzyme catalyses GDP-alpha-D-glucose + (R)-glycerate = (2R)-2-O-(alpha-D-glucopyranosyl)-glycerate + GDP + H(+). With respect to regulation, activity is not dependent on divalent cations, but it is enhanced by Mg(2+). Involved in the biosynthesis of the compatible solute alpha-D-mannosyl-glycerate (MG). Catalyzes the condensation of GDP-alpha-D-mannose (GDP-Man) with D-glycerate to produce alpha-D-mannosyl-glycerate. Can also use GDP-alpha-D-glucose (GDP-Glc) as sugar donor to produce alpha-D-glucopyranosyl-glycerate (GG). This Selaginella moellendorffii (Spikemoss) protein is Mannosylglycerate synthase.